The primary structure comprises 474 residues: Aspartyl protease family protein At5g10770 (474 aa).

A signal peptide spans 1-25 (MSINRNLLNIIIILCICLNLGCNDG). The region spanning 132–469 (YIVTVGLGTP…DGAGGRVGFA (338 aa)) is the Peptidase A1 domain. Residues Asp150 and Asp352 contribute to the active site. A disulfide bond links Cys391 and Cys432. The GPI-anchor amidated asparagine moiety is linked to residue Asn443. Residues 444–474 (AAIFGNVQQQTLEVVYDGAGGRVGFAPNGCS) constitute a propeptide, removed in mature form.

It belongs to the peptidase A1 family.

It localises to the cell membrane. Probably not redundant with AED1 and not involved in restriction of salicylic acid (SA) or systemic acquired resistance (SAR) signaling. The sequence is that of Aspartyl protease family protein At5g10770 from Arabidopsis thaliana (Mouse-ear cress).